The following is a 1232-amino-acid chain: Pyruvate:ferredoxin oxidoreductase (1232 aa).

Thr31 contributes to the pyruvate binding site. Glu64 contributes to the thiamine diphosphate binding site. Position 114 (Arg114) interacts with pyruvate. CoA-binding positions include 427–431 (ADGTV), Lys459, Asn560, and Asn602. 4Fe-4S ferredoxin-type domains lie at 680 to 709 (NVPQWVPENCIQCNQCAFVCPHSAILPVLA) and 736 to 767 (FRIQINTLDCMGCGNCADICPPKEKALVMQPL). 10 residues coordinate [4Fe-4S] cluster: Cys689, Cys692, Cys695, Cys699, Cys745, Cys748, Cys751, Cys755, Cys812, and Cys815. Residues Glu817, Cys840, and 962-965 (GDGW) each bind thiamine diphosphate. Cys840 provides a ligand contact to [4Fe-4S] cluster. Asp963 is a binding site for Mg(2+). Positions 983 and 985 each coordinate Ca(2+). Residues Thr991 and Val993 each contribute to the Mg(2+) site. Residue 991-996 (TEVYSN) participates in thiamine diphosphate binding. The Ca(2+) site is built by Ala1056, Phe1059, Gly1061, and Ser1063. [4Fe-4S] cluster is bound at residue Cys1071. An intrachain disulfide couples Cys1195 to Cys1212. The interval 1197–1232 (RDDTPMMARPDSGEACDQNRAGTSEQQGDLSKRTKK) is disordered. A compositionally biased stretch (polar residues) spans 1216–1225 (RAGTSEQQGD).

It belongs to the pyruvate:ferredoxin/flavodoxin oxidoreductase family. In terms of assembly, homodimer. [4Fe-4S] cluster serves as cofactor. Requires thiamine diphosphate as cofactor. The cofactor is Mg(2+).

Its subcellular location is the cytoplasm. It catalyses the reaction 2 oxidized [2Fe-2S]-[ferredoxin] + pyruvate + CoA = 2 reduced [2Fe-2S]-[ferredoxin] + acetyl-CoA + CO2 + H(+). Catalyzes the ferredoxin-dependent oxidative decarboxylation of pyruvate. Required for the transfer of electrons from pyruvate to ferredoxin. Ferredoxin I and ferredoxin II, which are single 4Fe-4S cluster ferredoxins are the most effective electron carriers of POR. This is Pyruvate:ferredoxin oxidoreductase from Desulfocurvibacter africanus (Desulfovibrio africanus).